The sequence spans 426 residues: Glutamate-1-semialdehyde 2,1-aminomutase (426 aa).

The residue at position 265 (Lys-265) is an N6-(pyridoxal phosphate)lysine.

The protein belongs to the class-III pyridoxal-phosphate-dependent aminotransferase family. HemL subfamily. Homodimer. It depends on pyridoxal 5'-phosphate as a cofactor.

It is found in the cytoplasm. It catalyses the reaction (S)-4-amino-5-oxopentanoate = 5-aminolevulinate. The protein operates within porphyrin-containing compound metabolism; protoporphyrin-IX biosynthesis; 5-aminolevulinate from L-glutamyl-tRNA(Glu): step 2/2. In Salmonella typhi, this protein is Glutamate-1-semialdehyde 2,1-aminomutase.